Here is a 314-residue protein sequence, read N- to C-terminus: Nucleoprotein (314 aa).

N-acetylmethionine; by host is present on methionine 1. Positions 38, 41, 118, 237, and 266 each coordinate RNA.

The protein belongs to the tenuiviruses nucleocapsid protein family.

The protein localises to the virion. The protein resides in the host cytoplasm. Functionally, encapsidates the genome, protecting it from nucleases. The encapsidated genomic RNA is termed the nucleocapsid (NC), and serves as template for viral transcription and replication. This chain is Nucleoprotein, found in Wheat yellow head virus (WYHV).